The primary structure comprises 306 residues: Ribosomal protein L11 methyltransferase (306 aa).

Residues Thr-139, Gly-173, Asp-195, and Asn-242 each coordinate S-adenosyl-L-methionine.

Belongs to the methyltransferase superfamily. PrmA family.

It localises to the cytoplasm. It catalyses the reaction L-lysyl-[protein] + 3 S-adenosyl-L-methionine = N(6),N(6),N(6)-trimethyl-L-lysyl-[protein] + 3 S-adenosyl-L-homocysteine + 3 H(+). Its function is as follows. Methylates ribosomal protein L11. This Nostoc sp. (strain PCC 7120 / SAG 25.82 / UTEX 2576) protein is Ribosomal protein L11 methyltransferase.